The primary structure comprises 157 residues: Small ribosomal subunit protein uS7 (157 aa).

Belongs to the universal ribosomal protein uS7 family. As to quaternary structure, part of the 30S ribosomal subunit. Contacts proteins S9 and S11.

Its function is as follows. One of the primary rRNA binding proteins, it binds directly to 16S rRNA where it nucleates assembly of the head domain of the 30S subunit. Is located at the subunit interface close to the decoding center, probably blocks exit of the E-site tRNA. This is Small ribosomal subunit protein uS7 from Variovorax paradoxus (strain S110).